The following is a 201-amino-acid chain: Proteasome subunit beta 1 (201 aa).

Position 1 (Met1) is a propeptide, removed in mature form; by autocatalysis. Thr2 acts as the Nucleophile in catalysis.

The protein belongs to the peptidase T1B family. As to quaternary structure, the 20S proteasome core is composed of 14 alpha and 14 beta subunits that assemble into four stacked heptameric rings, resulting in a barrel-shaped structure. The two inner rings, each composed of seven catalytic beta subunits, are sandwiched by two outer rings, each composed of seven alpha subunits. The catalytic chamber with the active sites is on the inside of the barrel. Has a gated structure, the ends of the cylinder being occluded by the N-termini of the alpha-subunits. Is capped at one or both ends by the proteasome regulatory ATPase, PAN.

Its subcellular location is the cytoplasm. It catalyses the reaction Cleavage of peptide bonds with very broad specificity.. With respect to regulation, the formation of the proteasomal ATPase PAN-20S proteasome complex, via the docking of the C-termini of PAN into the intersubunit pockets in the alpha-rings, triggers opening of the gate for substrate entry. Interconversion between the open-gate and close-gate conformations leads to a dynamic regulation of the 20S proteasome proteolysis activity. Its function is as follows. Component of the proteasome core, a large protease complex with broad specificity involved in protein degradation. The protein is Proteasome subunit beta 1 of Pyrobaculum neutrophilum (strain DSM 2338 / JCM 9278 / NBRC 100436 / V24Sta) (Thermoproteus neutrophilus).